Reading from the N-terminus, the 466-residue chain is Glutamate--tRNA ligase 1 (466 aa).

The 'HIGH' region signature appears at 9–19 (PSPTGMLHIGG). The short motif at 238-242 (KLSKR) is the 'KMSKS' region element. Residue Lys-241 participates in ATP binding.

It belongs to the class-I aminoacyl-tRNA synthetase family. Glutamate--tRNA ligase type 1 subfamily. Monomer.

It localises to the cytoplasm. The catalysed reaction is tRNA(Glu) + L-glutamate + ATP = L-glutamyl-tRNA(Glu) + AMP + diphosphate. Its function is as follows. Catalyzes the attachment of glutamate to tRNA(Glu) in a two-step reaction: glutamate is first activated by ATP to form Glu-AMP and then transferred to the acceptor end of tRNA(Glu). This Acidiphilium cryptum (strain JF-5) protein is Glutamate--tRNA ligase 1.